The sequence spans 94 residues: Translation initiation factor 1A 2 (94 aa).

The S1-like domain maps to 6-80 (GRRNLRMPND…EKANVEWRYS (75 aa)).

It belongs to the eIF-1A family.

Its function is as follows. Seems to be required for maximal rate of protein biosynthesis. Enhances ribosome dissociation into subunits and stabilizes the binding of the initiator Met-tRNA(I) to 40 S ribosomal subunits. The protein is Translation initiation factor 1A 2 (eIF1A2) of Halobacterium salinarum (strain ATCC 700922 / JCM 11081 / NRC-1) (Halobacterium halobium).